Reading from the N-terminus, the 438-residue chain is 23S rRNA (uracil(1939)-C(5))-methyltransferase RlmD (438 aa).

One can recognise a TRAM domain in the interval 10–69; the sequence is KASVNTKHQSVDVVRLDHNGAGIAFVDKKPVFIEGALPGEKAIIQFIEQKKQFSRAKLIK. Cysteine 82, cysteine 88, cysteine 91, and cysteine 169 together coordinate [4Fe-4S] cluster. Residues glutamine 272, phenylalanine 301, asparagine 306, glutamate 322, asparagine 349, and aspartate 370 each coordinate S-adenosyl-L-methionine. Cysteine 396 (nucleophile) is an active-site residue.

The protein belongs to the class I-like SAM-binding methyltransferase superfamily. RNA M5U methyltransferase family. RlmD subfamily.

It catalyses the reaction uridine(1939) in 23S rRNA + S-adenosyl-L-methionine = 5-methyluridine(1939) in 23S rRNA + S-adenosyl-L-homocysteine + H(+). Its function is as follows. Catalyzes the formation of 5-methyl-uridine at position 1939 (m5U1939) in 23S rRNA. The chain is 23S rRNA (uracil(1939)-C(5))-methyltransferase RlmD from Aliivibrio fischeri (strain ATCC 700601 / ES114) (Vibrio fischeri).